The chain runs to 363 residues: Type-1 angiotensin II receptor B (363 aa).

The Extracellular segment spans residues 1 to 27 (MLSNISAGENSEVEKIVVKCSKSGMHN). N-linked (GlcNAc...) asparagine glycosylation is present at N4. 2 cysteine pairs are disulfide-bonded: C20–C274 and C103–C182. A helical transmembrane segment spans residues 28 to 57 (YIFITIPIIYSTIFVVGVFGNSLVVIVIYS). At 58–63 (YMKMKT) the chain is on the cytoplasmic side. A helical transmembrane segment spans residues 64 to 91 (MASVFLMNLALSDLCFVITLPLWAVYTA). At 92 to 100 (MHYHWPFGD) the chain is on the extracellular side. The chain crosses the membrane as a helical span at residues 101–127 (LLCKIASTAITLNLYTTVFLLTCLSID). Residues 128–143 (RYSAIVHPMKSRIRRT) are Cytoplasmic-facing. The chain crosses the membrane as a helical span at residues 144-167 (VMVARLTCVGIWLVAFLASLPSVI). The Extracellular segment spans residues 168–192 (YRQIFIFPDTNQTVCALVYHSGHIY). R169 contacts angiotensin II. The N-linked (GlcNAc...) asparagine glycan is linked to N178. Y186 and K201 together coordinate angiotensin II. The helical transmembrane segment at 193 to 218 (FMVGMSLVKNIVGFFIPFVIILTSYT) threads the bilayer. The Cytoplasmic portion of the chain corresponds to 219-239 (LIGKTLKEVYRAQRARNDDIF). The chain crosses the membrane as a helical span at residues 240–268 (KMIVAVVLLFFFCWIPHQVFTFLDVLIQM). Topologically, residues 269–278 (DVIQNCKMYD) are extracellular. The chain crosses the membrane as a helical span at residues 279–304 (IVDTGMPITICIAYFNSCLNPFLYGF). Residues 305-363 (FGKKFRKHFLQLIKYIPPKMRTHASVNTKSSTVSQRLSDTKCASNKIALWIFDIEEHCK) are Cytoplasmic-facing. 2 S-palmitoyl cysteine lipidation sites follow: C346 and C362.

This sequence belongs to the G-protein coupled receptor 1 family. C-terminal Ser or Thr residues may be phosphorylated. Heart membranes, follicular oocytes.

It localises to the cell membrane. Its function is as follows. Receptor for angiotensin II, a vasoconstricting peptide, which acts as a key regulator of blood pressure and sodium retention by the kidney. The activated receptor in turn couples to G-alpha proteins G(q) (GNAQ, GNA11, GNA14 or GNA15) and thus activates phospholipase C and increases the cytosolic Ca(2+) concentrations, which in turn triggers cellular responses such as stimulation of protein kinase C. This is Type-1 angiotensin II receptor B (agtr1-b) from Xenopus laevis (African clawed frog).